Reading from the N-terminus, the 2156-residue chain is Oxygen-regulated protein 1 (2156 aa).

Residues 1–19 (MSDTPSTGFSIIHPTSSEG) are compositionally biased toward polar residues. The disordered stretch occupies residues 1 to 25 (MSDTPSTGFSIIHPTSSEGQVPPPR). 2 Doublecortin domains span residues 36 to 118 (KRIS…VDLD) and 154 to 233 (RSLV…GNYD). 4 disordered regions span residues 353 to 375 (VSKT…RTES), 666 to 686 (SSVA…SRYQ), 1438 to 1458 (DMEE…MTSS), and 1590 to 1621 (DWSD…TQEK).

Interacts (via the doublecortin domains) with microtubules. Interacts with RP1L1. Interacts with MAK. As to expression, expressed in retina. Not expressed in heart, brain, placenta, lung, liver, skeletal muscle, kidney, spleen and pancreas.

It is found in the cytoplasm. The protein localises to the cytoskeleton. It localises to the cilium axoneme. The protein resides in the cell projection. Its subcellular location is the cilium. It is found in the photoreceptor outer segment. Functionally, microtubule-associated protein regulating the stability and length of the microtubule-based axoneme of photoreceptors. Required for the differentiation of photoreceptor cells, it plays a role in the organization of the outer segment of rod and cone photoreceptors ensuring the correct orientation and higher-order stacking of outer segment disks along the photoreceptor axoneme. The chain is Oxygen-regulated protein 1 (RP1) from Homo sapiens (Human).